The following is a 375-amino-acid chain: MSTAGKVIRCKAAVLWKPGAPLTMEEIDVAPPKGKEVRVKMVAAGICGTDIKSLDNKKLAPFCPIIMGHEGTGIVESVGEGVSTVKTGDKVIILCLPQCGECNTCLNSKNNICKEVRLSGTHLTSEGNSRITCKGKTTYQYITTGTFSEYIVIKEISVAKVDEDALLEKACIIGCGFATGFGAAINSAKVSPGSTCAVFGLGGVGLSVIMGCKAAGAARIIAVDTNKDKFAKAKTVGATECIDPQDFEKPIQQVLFDMMNDGADFTFEVTGNPETVETALASCHKDHGVCVIVGSLASWIQLNINSHLFFSGRTLKGSVLGGWKTKEEIPKLVSDYTAKKFNLDPLITHTLTLDKVNEAIQLMKNGQCIRCVLLP.

Zn(2+) contacts are provided by C47, H69, C99, C102, C105, C113, and C175. NAD(+)-binding positions include 200 to 205, D224, K229, 293 to 295, and R370; these read GLGGVG and VGS.

It belongs to the zinc-containing alcohol dehydrogenase family. Class-V subfamily. Dimer. Zn(2+) is required as a cofactor. In terms of tissue distribution, liver.

It is found in the cytoplasm. The catalysed reaction is a primary alcohol + NAD(+) = an aldehyde + NADH + H(+). It carries out the reaction a secondary alcohol + NAD(+) = a ketone + NADH + H(+). In terms of biological role, alcohol dehydrogenase. Catalyzes the NAD-dependent oxidation of primary alcohols to the corresponding aldehydes. Oxidizes secondary alcohols to the corresponding ketones. The sequence is that of Alcohol dehydrogenase 6 (ADH6) from Peromyscus maniculatus (North American deer mouse).